Here is a 157-residue protein sequence, read N- to C-terminus: Ribonuclease H (157 aa).

The RNase H type-1 domain occupies 3–144; the sequence is NSKTVHLYTD…CDELARDAAT (142 aa). The Mg(2+) site is built by D12, E50, D72, and D136.

It belongs to the RNase H family. As to quaternary structure, monomer. Mg(2+) is required as a cofactor.

It localises to the cytoplasm. The catalysed reaction is Endonucleolytic cleavage to 5'-phosphomonoester.. Its function is as follows. Endonuclease that specifically degrades the RNA of RNA-DNA hybrids. The protein is Ribonuclease H of Idiomarina loihiensis (strain ATCC BAA-735 / DSM 15497 / L2-TR).